We begin with the raw amino-acid sequence, 257 residues long: Hydroxyacylglutathione hydrolase (257 aa).

7 residues coordinate Zn(2+): His-54, His-56, Asp-58, His-59, His-113, Asp-137, and His-175.

The protein belongs to the metallo-beta-lactamase superfamily. Glyoxalase II family. As to quaternary structure, monomer. Zn(2+) is required as a cofactor.

The catalysed reaction is an S-(2-hydroxyacyl)glutathione + H2O = a 2-hydroxy carboxylate + glutathione + H(+). Its pathway is secondary metabolite metabolism; methylglyoxal degradation; (R)-lactate from methylglyoxal: step 2/2. Thiolesterase that catalyzes the hydrolysis of S-D-lactoyl-glutathione to form glutathione and D-lactic acid. This chain is Hydroxyacylglutathione hydrolase, found in Crocosphaera subtropica (strain ATCC 51142 / BH68) (Cyanothece sp. (strain ATCC 51142)).